The following is a 258-amino-acid chain: Polysialic acid transport protein KpsM (258 aa).

The ABC transmembrane type-2 domain maps to 30 to 251 (LGYLWAILEP…FIGLALYRTR (222 aa)). Transmembrane regions (helical) follow at residues 33–53 (LWAILEPSAHLLILLGIFGYI), 61–81 (ISFPVFLLNGLIPFFIFSSIS), 110–130 (ALLETLIYVAVYILLMLIVWM), 144–164 (VLTWSLLIILSCGIGLIFMVV), 175–195 (LPILLKPLYFISCIMFPLHSI), and 227–247 (GVSLNYLAMFTLVTLFIGLAL).

It belongs to the ABC-2 integral membrane protein family.

Its subcellular location is the cell inner membrane. KpsM and KpsT constitute a system for the transport of polysialic acid across the cytoplasmic membrane. The chain is Polysialic acid transport protein KpsM (kpsM) from Escherichia coli.